Consider the following 339-residue polypeptide: Ferredoxin--NADP reductase (339 aa).

7 residues coordinate FAD: D32, Q40, Y45, V85, F120, D287, and T327.

Belongs to the ferredoxin--NADP reductase type 2 family. Homodimer. The cofactor is FAD.

The enzyme catalyses 2 reduced [2Fe-2S]-[ferredoxin] + NADP(+) + H(+) = 2 oxidized [2Fe-2S]-[ferredoxin] + NADPH. This is Ferredoxin--NADP reductase from Wolbachia sp. subsp. Brugia malayi (strain TRS).